A 283-amino-acid polypeptide reads, in one-letter code: Pantothenate synthetase (283 aa).

An ATP-binding site is contributed by 31–38 (MGALHDGH). The active-site Proton donor is H38. Residue Q62 participates in (R)-pantoate binding. Q62 serves as a coordination point for beta-alanine. 148 to 151 (GKKD) is a binding site for ATP. Residue Q154 participates in (R)-pantoate binding. ATP is bound by residues I177 and 185–188 (KSSR).

It belongs to the pantothenate synthetase family. In terms of assembly, homodimer.

The protein resides in the cytoplasm. It catalyses the reaction (R)-pantoate + beta-alanine + ATP = (R)-pantothenate + AMP + diphosphate + H(+). Its pathway is cofactor biosynthesis; (R)-pantothenate biosynthesis; (R)-pantothenate from (R)-pantoate and beta-alanine: step 1/1. In terms of biological role, catalyzes the condensation of pantoate with beta-alanine in an ATP-dependent reaction via a pantoyl-adenylate intermediate. In Oceanobacillus iheyensis (strain DSM 14371 / CIP 107618 / JCM 11309 / KCTC 3954 / HTE831), this protein is Pantothenate synthetase.